A 283-amino-acid chain; its full sequence is Acetylglutamate kinase (283 aa).

Substrate-binding positions include glycine 63 to glycine 64, arginine 85, and asparagine 178.

Belongs to the acetylglutamate kinase family. ArgB subfamily.

It is found in the cytoplasm. The catalysed reaction is N-acetyl-L-glutamate + ATP = N-acetyl-L-glutamyl 5-phosphate + ADP. The protein operates within amino-acid biosynthesis; L-arginine biosynthesis; N(2)-acetyl-L-ornithine from L-glutamate: step 2/4. Its function is as follows. Catalyzes the ATP-dependent phosphorylation of N-acetyl-L-glutamate. The polypeptide is Acetylglutamate kinase (Prochlorococcus marinus (strain MIT 9515)).